The following is a 119-amino-acid chain: UPF0102 protein SGR_1878 (119 aa).

It belongs to the UPF0102 family.

The polypeptide is UPF0102 protein SGR_1878 (Streptomyces griseus subsp. griseus (strain JCM 4626 / CBS 651.72 / NBRC 13350 / KCC S-0626 / ISP 5235)).